A 251-amino-acid chain; its full sequence is Large ribosomal subunit protein uL3 (251 aa).

The residue at position 151 (Gln151) is an N5-methylglutamine. The disordered stretch occupies residues 214 to 251 (KDAPFPAGLKSAANSNSAPTETPAEEVAAPEATEGQEG). The span at 231 to 251 (APTETPAEEVAAPEATEGQEG) shows a compositional bias: low complexity.

Belongs to the universal ribosomal protein uL3 family. In terms of assembly, part of the 50S ribosomal subunit. Forms a cluster with proteins L14 and L19. In terms of processing, methylated by PrmB.

In terms of biological role, one of the primary rRNA binding proteins, it binds directly near the 3'-end of the 23S rRNA, where it nucleates assembly of the 50S subunit. The sequence is that of Large ribosomal subunit protein uL3 from Rhizorhabdus wittichii (strain DSM 6014 / CCUG 31198 / JCM 15750 / NBRC 105917 / EY 4224 / RW1) (Sphingomonas wittichii).